Here is a 230-residue protein sequence, read N- to C-terminus: Probable endonuclease C19F8.04c (230 aa).

Residues 10-27 form a helical membrane-spanning segment; sequence AIIGTGLITTSIGGFFFL. Residues 55–216 enclose the TNase-like domain; sequence KTMFGYVTRV…KKKKLSLWSQ (162 aa). Residue arginine 104 is part of the active site. Aspartate 109 is a Ca(2+) binding site. Catalysis depends on residues glutamate 112 and arginine 152.

The protein belongs to the LCL3 family.

The protein resides in the mitochondrion. The protein localises to the membrane. This chain is Probable endonuclease C19F8.04c, found in Schizosaccharomyces pombe (strain 972 / ATCC 24843) (Fission yeast).